The primary structure comprises 459 residues: Bifunctional protein GlmU (459 aa).

The pyrophosphorylase stretch occupies residues 1-230 (MSNRFAVILA…FDETLGVNDR (230 aa)). Residues 9–12 (LAAG), lysine 23, glutamine 73, and 78–79 (GT) contribute to the UDP-N-acetyl-alpha-D-glucosamine site. A Mg(2+)-binding site is contributed by aspartate 103. Positions 140, 155, 170, and 228 each coordinate UDP-N-acetyl-alpha-D-glucosamine. A Mg(2+)-binding site is contributed by asparagine 228. The tract at residues 231 to 251 (VALSQAEIIMKNRINRKNMVN) is linker. Residues 252 to 459 (GVTIIDPSNT…VDQLLNKKKS (208 aa)) form an N-acetyltransferase region. UDP-N-acetyl-alpha-D-glucosamine is bound by residues arginine 333 and lysine 351. Histidine 363 acts as the Proton acceptor in catalysis. UDP-N-acetyl-alpha-D-glucosamine is bound by residues tyrosine 366 and asparagine 377. Acetyl-CoA-binding positions include 386–387 (NY), alanine 423, and arginine 440.

This sequence in the N-terminal section; belongs to the N-acetylglucosamine-1-phosphate uridyltransferase family. In the C-terminal section; belongs to the transferase hexapeptide repeat family. In terms of assembly, homotrimer. Requires Mg(2+) as cofactor.

The protein resides in the cytoplasm. It catalyses the reaction alpha-D-glucosamine 1-phosphate + acetyl-CoA = N-acetyl-alpha-D-glucosamine 1-phosphate + CoA + H(+). It carries out the reaction N-acetyl-alpha-D-glucosamine 1-phosphate + UTP + H(+) = UDP-N-acetyl-alpha-D-glucosamine + diphosphate. Its pathway is nucleotide-sugar biosynthesis; UDP-N-acetyl-alpha-D-glucosamine biosynthesis; N-acetyl-alpha-D-glucosamine 1-phosphate from alpha-D-glucosamine 6-phosphate (route II): step 2/2. It functions in the pathway nucleotide-sugar biosynthesis; UDP-N-acetyl-alpha-D-glucosamine biosynthesis; UDP-N-acetyl-alpha-D-glucosamine from N-acetyl-alpha-D-glucosamine 1-phosphate: step 1/1. It participates in bacterial outer membrane biogenesis; LPS lipid A biosynthesis. Catalyzes the last two sequential reactions in the de novo biosynthetic pathway for UDP-N-acetylglucosamine (UDP-GlcNAc). The C-terminal domain catalyzes the transfer of acetyl group from acetyl coenzyme A to glucosamine-1-phosphate (GlcN-1-P) to produce N-acetylglucosamine-1-phosphate (GlcNAc-1-P), which is converted into UDP-GlcNAc by the transfer of uridine 5-monophosphate (from uridine 5-triphosphate), a reaction catalyzed by the N-terminal domain. The sequence is that of Bifunctional protein GlmU from Bacillus cereus (strain AH187).